The chain runs to 211 residues: Large ribosomal subunit protein bL25 (211 aa).

Residues 188-211 (HREEEKAPEETGEAAPAPTPETGQ) form a disordered region. A compositionally biased stretch (low complexity) spans 200–211 (EAAPAPTPETGQ).

This sequence belongs to the bacterial ribosomal protein bL25 family. CTC subfamily. As to quaternary structure, part of the 50S ribosomal subunit; part of the 5S rRNA/L5/L18/L25 subcomplex. Contacts the 5S rRNA. Binds to the 5S rRNA independently of L5 and L18.

Its function is as follows. This is one of the proteins that binds to the 5S RNA in the ribosome where it forms part of the central protuberance. In Desulforudis audaxviator (strain MP104C), this protein is Large ribosomal subunit protein bL25.